The chain runs to 651 residues: Acetyl-coenzyme A synthetase (651 aa).

Residues 189 to 192 (RGGK), Thr311, and Asn335 contribute to the CoA site. Residues 387 to 389 (GEP), 411 to 416 (DTWWQT), Asp500, and Arg515 each bind ATP. Ser523 is a binding site for CoA. Arg526 provides a ligand contact to ATP. Residues Val537, His539, and Val542 each coordinate Mg(2+). Arg586 contributes to the CoA binding site. N6-acetyllysine is present on Lys611.

It belongs to the ATP-dependent AMP-binding enzyme family. The cofactor is Mg(2+). Post-translationally, acetylated. Deacetylation by the SIR2-homolog deacetylase activates the enzyme.

It carries out the reaction acetate + ATP + CoA = acetyl-CoA + AMP + diphosphate. Functionally, catalyzes the conversion of acetate into acetyl-CoA (AcCoA), an essential intermediate at the junction of anabolic and catabolic pathways. AcsA undergoes a two-step reaction. In the first half reaction, AcsA combines acetate with ATP to form acetyl-adenylate (AcAMP) intermediate. In the second half reaction, it can then transfer the acetyl group from AcAMP to the sulfhydryl group of CoA, forming the product AcCoA. This chain is Acetyl-coenzyme A synthetase, found in Brucella abortus (strain S19).